Consider the following 1439-residue polypeptide: Gag-Pol polyprotein (1439 aa).

Gly2 carries the N-myristoyl glycine; by host lipid modification. Positions 7-31 (ILRGEKLDAWEKIKLRPGGKKHYML) are interaction with Gp41. The interaction with host CALM1 stretch occupies residues 8–43 (LRGEKLDAWEKIKLRPGGKKHYMLKHLVWANRELEK). The segment at 12–19 (KLDAWEKI) is interaction with host AP3D1. Positions 14–33 (DAWEKIKLRPGGKKHYMLKH) are interaction with membrane phosphatidylinositol 4,5-bisphosphate and RNA. The Nuclear export signal signature appears at 16 to 22 (WEKIKLR). The short motif at 26–32 (KKHYMLK) is the Nuclear localization signal element. The interaction with membrane phosphatidylinositol 4,5-bisphosphate stretch occupies residues 73 to 77 (EELKS). A disordered region spans residues 105 to 128 (EEEQNESQQKTQQAGAADRGKDSQ). Residue Tyr130 is modified to Phosphotyrosine; by host. An interaction with human PPIA/CYPA and NUP153 region spans residues 187–225 (NTVGGHQAAMQMLKDTINEEAAEWDRLHPVHAGPVAPGQ). The dimerization/Multimerization of capsid protein p24 stretch occupies residues 275 to 361 (YSPVSILDIK…GGPAHKARVL (87 aa)). 2 consecutive CCHC-type zinc fingers follow at residues 387–404 (IKCFNCGKEGHLARNCRA) and 408–425 (KGCWKCGKEGHQMKDCTE). Residues 441 to 485 (KAREFPSEQTRANSPTRESQTRANSPTTRELQVRGSNTFSEAGAE) form a disordered region. Residues 447–480 (SEQTRANSPTRESQTRANSPTTRELQVRGSNTFS) show a composition bias toward polar residues. Positions 493 to 497 (PQITL) are dimerization of protease. A Peptidase A2 domain is found at 512–581 (KEALLDTGAD…TPVNIIGRNM (70 aa)). Asp517 (for protease activity; shared with dimeric partner) is an active-site residue. Dimerization of protease stretches follow at residues 541–547 (GIGGFIK) and 580–592 (NMLTQLGRTLNFP). A Reverse transcriptase domain is found at 635-825 (EGKISRIGPE…PPFLWMGYEL (191 aa)). Positions 701, 776, and 777 each coordinate Mg(2+). Positions 818 to 826 (FLWMGYELH) are RT 'primer grip'. The short motif at 989 to 1005 (WEAWWTDYWQATWIPEW) is the Tryptophan repeat motif element. The RNase H type-1 domain occupies 1025-1148 (IAGVETFYVD…VDKLVSSGIR (124 aa)). 4 residues coordinate Mg(2+): Asp1034, Glu1069, Asp1089, and Asp1140. The Integrase-type zinc-finger motif lies at 1154–1195 (DGIDKAQEEHEKYHSNWRAMANEFNIPPVVPKEIVACCDKCQ). Zn(2+)-binding residues include His1163, His1167, Cys1191, and Cys1194. An Integrase catalytic domain is found at 1205–1355 (VNCSPGIWQL…SAGERIIDII (151 aa)). Mg(2+) contacts are provided by Asp1215, Asp1267, and Glu1303. Positions 1374–1421 (FRVYYRDSRDPIWKGPAKLLWKGEGAVVIQDNSDIKVVPRRKAKIIRD) form a DNA-binding region, integrase-type.

In terms of assembly, homotrimer; further assembles as hexamers of trimers. Interacts with gp41 (via C-terminus). Interacts with host CALM1; this interaction induces a conformational change in the Matrix protein, triggering exposure of the myristate group. Interacts with host AP3D1; this interaction allows the polyprotein trafficking to multivesicular bodies during virus assembly. Part of the pre-integration complex (PIC) which is composed of viral genome, matrix protein, Vpr and integrase. Homodimer; the homodimer further multimerizes as homohexamers or homopentamers. Interacts with human PPIA/CYPA; This interaction stabilizes the capsid. Interacts with human NUP153. Interacts with host PDZD8; this interaction stabilizes the capsid. Interacts with monkey TRIM5; this interaction destabilizes the capsid. As to quaternary structure, homodimer, whose active site consists of two apposed aspartic acid residues. In terms of assembly, heterodimer of p66 RT and p51 RT (RT p66/p51). Heterodimerization of RT is essential for DNA polymerase activity. The overall folding of the subdomains is similar in p66 RT and p51 RT but the spatial arrangements of the subdomains are dramatically different. Homotetramer; may further associate as a homohexadecamer. Part of the pre-integration complex (PIC) which is composed of viral genome, matrix protein, Vpr and integrase. Interacts with human SMARCB1/INI1 and human PSIP1/LEDGF isoform 1. Interacts with human KPNA3; this interaction might play a role in nuclear import of the pre-integration complex. Interacts with human NUP153; this interaction might play a role in nuclear import of the pre-integration complex. The cofactor is Mg(2+). Specific enzymatic cleavages by the viral protease yield mature proteins. The protease is released by autocatalytic cleavage. The polyprotein is cleaved during and after budding, this process is termed maturation. Proteolytic cleavage of p66 RT removes the RNase H domain to yield the p51 RT subunit. Nucleocapsid protein p7 might be further cleaved after virus entry. Post-translationally, tyrosine phosphorylated presumably in the virion by a host kinase. Phosphorylation is apparently not a major regulator of membrane association. In terms of processing, phosphorylated possibly by host MAPK1; this phosphorylation is necessary for Pin1-mediated virion uncoating. Methylated by host PRMT6, impairing its function by reducing RNA annealing and the initiation of reverse transcription.

Its subcellular location is the host cell membrane. It is found in the host endosome. The protein resides in the host multivesicular body. The protein localises to the virion membrane. It localises to the host nucleus. Its subcellular location is the host cytoplasm. It is found in the virion. It carries out the reaction Specific for a P1 residue that is hydrophobic, and P1' variable, but often Pro.. The enzyme catalyses Endohydrolysis of RNA in RNA/DNA hybrids. Three different cleavage modes: 1. sequence-specific internal cleavage of RNA. Human immunodeficiency virus type 1 and Moloney murine leukemia virus enzymes prefer to cleave the RNA strand one nucleotide away from the RNA-DNA junction. 2. RNA 5'-end directed cleavage 13-19 nucleotides from the RNA end. 3. DNA 3'-end directed cleavage 15-20 nucleotides away from the primer terminus.. The catalysed reaction is 3'-end directed exonucleolytic cleavage of viral RNA-DNA hybrid.. It catalyses the reaction DNA(n) + a 2'-deoxyribonucleoside 5'-triphosphate = DNA(n+1) + diphosphate. Its activity is regulated as follows. Protease: The viral protease is inhibited by many synthetic protease inhibitors (PIs), such as amprenavir, atazanavir, indinavir, loprinavir, nelfinavir, ritonavir and saquinavir. Use of protease inhibitors in tritherapy regimens permit more ambitious therapeutic strategies. Reverse transcriptase/ribonuclease H: RT can be inhibited either by nucleoside RT inhibitors (NRTIs) or by non nucleoside RT inhibitors (NNRTIs). NRTIs act as chain terminators, whereas NNRTIs inhibit DNA polymerization by binding a small hydrophobic pocket near the RT active site and inducing an allosteric change in this region. Classical NRTIs are abacavir, adefovir (PMEA), didanosine (ddI), lamivudine (3TC), stavudine (d4T), tenofovir (PMPA), zalcitabine (ddC), and zidovudine (AZT). Classical NNRTIs are atevirdine (BHAP U-87201E), delavirdine, efavirenz (DMP-266), emivirine (I-EBU), and nevirapine (BI-RG-587). The tritherapies used as a basic effective treatment of AIDS associate two NRTIs and one NNRTI. Functionally, mediates, with Gag polyprotein, the essential events in virion assembly, including binding the plasma membrane, making the protein-protein interactions necessary to create spherical particles, recruiting the viral Env proteins, and packaging the genomic RNA via direct interactions with the RNA packaging sequence (Psi). Gag-Pol polyprotein may regulate its own translation, by the binding genomic RNA in the 5'-UTR. At low concentration, the polyprotein would promote translation, whereas at high concentration, the polyprotein would encapsidate genomic RNA and then shut off translation. In terms of biological role, targets the polyprotein to the plasma membrane via a multipartite membrane-binding signal, that includes its myristoylated N-terminus. Matrix protein is part of the pre-integration complex. Implicated in the release from host cell mediated by Vpu. Binds to RNA. Its function is as follows. Forms the conical core that encapsulates the genomic RNA-nucleocapsid complex in the virion. Most core are conical, with only 7% tubular. The core is constituted by capsid protein hexamer subunits. The core is disassembled soon after virion entry. Host restriction factors such as TRIM5-alpha or TRIMCyp bind retroviral capsids and cause premature capsid disassembly, leading to blocks in reverse transcription. Capsid restriction by TRIM5 is one of the factors which restricts HIV-1 to the human species. Host PIN1 apparently facilitates the virion uncoating. On the other hand, interactions with PDZD8 or CYPA stabilize the capsid. Encapsulates and protects viral dimeric unspliced genomic RNA (gRNA). Binds these RNAs through its zinc fingers. Acts as a nucleic acid chaperone which is involved in rearangement of nucleic acid secondary structure during gRNA retrotranscription. Also facilitates template switch leading to recombination. As part of the polyprotein, participates in gRNA dimerization, packaging, tRNA incorporation and virion assembly. Functionally, aspartyl protease that mediates proteolytic cleavages of Gag and Gag-Pol polyproteins during or shortly after the release of the virion from the plasma membrane. Cleavages take place as an ordered, step-wise cascade to yield mature proteins. This process is called maturation. Displays maximal activity during the budding process just prior to particle release from the cell. Also cleaves Nef and Vif, probably concomitantly with viral structural proteins on maturation of virus particles. Hydrolyzes host EIF4GI and PABP1 in order to shut off the capped cellular mRNA translation. The resulting inhibition of cellular protein synthesis serves to ensure maximal viral gene expression and to evade host immune response. Also mediates cleavage of host YTHDF3. Mediates cleavage of host CARD8, thereby activating the CARD8 inflammasome, leading to the clearance of latent HIV-1 in patient CD4(+) T-cells after viral reactivation; in contrast, HIV-1 can evade CARD8-sensing when its protease remains inactive in infected cells prior to viral budding. In terms of biological role, multifunctional enzyme that converts the viral RNA genome into dsDNA in the cytoplasm, shortly after virus entry into the cell. This enzyme displays a DNA polymerase activity that can copy either DNA or RNA templates, and a ribonuclease H (RNase H) activity that cleaves the RNA strand of RNA-DNA heteroduplexes in a partially processive 3' to 5' endonucleasic mode. Conversion of viral genomic RNA into dsDNA requires many steps. A tRNA(3)-Lys binds to the primer-binding site (PBS) situated at the 5'-end of the viral RNA. RT uses the 3' end of the tRNA primer to perform a short round of RNA-dependent minus-strand DNA synthesis. The reading proceeds through the U5 region and ends after the repeated (R) region which is present at both ends of viral RNA. The portion of the RNA-DNA heteroduplex is digested by the RNase H, resulting in a ssDNA product attached to the tRNA primer. This ssDNA/tRNA hybridizes with the identical R region situated at the 3' end of viral RNA. This template exchange, known as minus-strand DNA strong stop transfer, can be either intra- or intermolecular. RT uses the 3' end of this newly synthesized short ssDNA to perform the RNA-dependent minus-strand DNA synthesis of the whole template. RNase H digests the RNA template except for two polypurine tracts (PPTs) situated at the 5'-end and near the center of the genome. It is not clear if both polymerase and RNase H activities are simultaneous. RNase H probably can proceed both in a polymerase-dependent (RNA cut into small fragments by the same RT performing DNA synthesis) and a polymerase-independent mode (cleavage of remaining RNA fragments by free RTs). Secondly, RT performs DNA-directed plus-strand DNA synthesis using the PPTs that have not been removed by RNase H as primers. PPTs and tRNA primers are then removed by RNase H. The 3' and 5' ssDNA PBS regions hybridize to form a circular dsDNA intermediate. Strand displacement synthesis by RT to the PBS and PPT ends produces a blunt ended, linear dsDNA copy of the viral genome that includes long terminal repeats (LTRs) at both ends. Its function is as follows. Catalyzes viral DNA integration into the host chromosome, by performing a series of DNA cutting and joining reactions. This enzyme activity takes place after virion entry into a cell and reverse transcription of the RNA genome in dsDNA. The first step in the integration process is 3' processing. This step requires a complex comprising the viral genome, matrix protein, Vpr and integrase. This complex is called the pre-integration complex (PIC). The integrase protein removes 2 nucleotides from each 3' end of the viral DNA, leaving recessed CA OH's at the 3' ends. In the second step, the PIC enters cell nucleus. This process is mediated through integrase and Vpr proteins, and allows the virus to infect a non dividing cell. This ability to enter the nucleus is specific of lentiviruses, other retroviruses cannot and rely on cell division to access cell chromosomes. In the third step, termed strand transfer, the integrase protein joins the previously processed 3' ends to the 5' ends of strands of target cellular DNA at the site of integration. The 5'-ends are produced by integrase-catalyzed staggered cuts, 5 bp apart. A Y-shaped, gapped, recombination intermediate results, with the 5'-ends of the viral DNA strands and the 3' ends of target DNA strands remaining unjoined, flanking a gap of 5 bp. The last step is viral DNA integration into host chromosome. This involves host DNA repair synthesis in which the 5 bp gaps between the unjoined strands are filled in and then ligated. Since this process occurs at both cuts flanking the HIV genome, a 5 bp duplication of host DNA is produced at the ends of HIV-1 integration. Alternatively, Integrase may catalyze the excision of viral DNA just after strand transfer, this is termed disintegration. This is Gag-Pol polyprotein (gag-pol) from Human immunodeficiency virus type 1 group M subtype C (isolate ETH2220) (HIV-1).